Consider the following 66-residue polypeptide: U1-theraphotoxin-Cg1a 2 (66 aa).

A signal peptide spans 1-21 (MKTSALFVIFGLVLLFCNSFA). A propeptide spanning residues 22-29 (AELEMTGR) is cleaved from the precursor. Cystine bridges form between Cys31-Cys46, Cys38-Cys51, and Cys45-Cys58. At Pro63 the chain carries Proline amide.

This sequence belongs to the neurotoxin 10 (Hwtx-1) family. 46 (Jztx-7/10/12) subfamily. Expressed by the venom gland.

The protein resides in the secreted. In terms of biological role, probable ion channel inhibitor. The sequence is that of U1-theraphotoxin-Cg1a 2 from Chilobrachys guangxiensis (Chinese earth tiger tarantula).